We begin with the raw amino-acid sequence, 76 residues long: Small ribosomal subunit protein bS18 (76 aa).

This sequence belongs to the bacterial ribosomal protein bS18 family. Part of the 30S ribosomal subunit. Forms a tight heterodimer with protein bS6.

Functionally, binds as a heterodimer with protein bS6 to the central domain of the 16S rRNA, where it helps stabilize the platform of the 30S subunit. The chain is Small ribosomal subunit protein bS18 from Methylococcus capsulatus (strain ATCC 33009 / NCIMB 11132 / Bath).